A 38-amino-acid chain; its full sequence is Kappa-actitoxin-Bcs3a (38 aa).

The ShKT domain maps to 2–37 (CIDRFPTGTCKHVKKGGSCKNSQKYRINCAKTCGLC). Intrachain disulfides connect C2–C37, C11–C30, and C20–C34. The tract at residues 25 to 26 (KY) is crucial for binding to potassium channels.

The protein belongs to the sea anemone type 1 potassium channel toxin family. Type 1b subfamily.

It is found in the secreted. Its subcellular location is the nematocyst. Its function is as follows. Inhibits voltage-gated potassium channels (IC(50)=405.0 nM for rKCNA1/Kv1.1, IC(50)=0.03 nM for rKCNA2/Kv1.2, IC(50)=1.31 nM for rKCNA6/Kv1.6, IC(50)=74.11 nM for hKCNA3/Kv1.3, and IC(50)=247.69 nM for insect Shaker IR). Binds the Shaker IR channels in a voltage-independent manner. In Bunodosoma caissarum (Sea anemone), this protein is Kappa-actitoxin-Bcs3a.